A 283-amino-acid polypeptide reads, in one-letter code: D-alanine aminotransferase (283 aa).

Tyr-31 is a substrate binding site. Pyridoxal 5'-phosphate is bound at residue Arg-50. The substrate site is built by Arg-98 and His-100. Residue Lys-144 is the Proton acceptor of the active site. Lys-144 carries the post-translational modification N6-(pyridoxal phosphate)lysine. Glu-176 provides a ligand contact to pyridoxal 5'-phosphate.

This sequence belongs to the class-IV pyridoxal-phosphate-dependent aminotransferase family. As to quaternary structure, homodimer. Pyridoxal 5'-phosphate serves as cofactor.

It catalyses the reaction D-alanine + 2-oxoglutarate = D-glutamate + pyruvate. Its function is as follows. Acts on the D-isomers of alanine, leucine, aspartate, glutamate, aminobutyrate, norvaline and asparagine. The enzyme transfers an amino group from a substrate D-amino acid to the pyridoxal phosphate cofactor to form pyridoxamine and an alpha-keto acid in the first half-reaction. The second half-reaction is the reverse of the first, transferring the amino group from the pyridoxamine to a second alpha-keto acid to form the product D-amino acid via a ping-pong mechanism. This is an important process in the formation of D-alanine and D-glutamate, which are essential bacterial cell wall components. This chain is D-alanine aminotransferase (dat), found in Bacillus licheniformis.